Consider the following 125-residue polypeptide: Small ribosomal subunit protein uS12 (125 aa).

Position 89 is a 3-methylthioaspartic acid (Asp89). Residues 100 to 125 (GSLDTQGVKDRKQSRSKYGAKRPKAA) form a disordered region. Over residues 113-125 (SRSKYGAKRPKAA) the composition is skewed to basic residues.

This sequence belongs to the universal ribosomal protein uS12 family. As to quaternary structure, part of the 30S ribosomal subunit. Contacts proteins S8 and S17. May interact with IF1 in the 30S initiation complex.

Its function is as follows. With S4 and S5 plays an important role in translational accuracy. Interacts with and stabilizes bases of the 16S rRNA that are involved in tRNA selection in the A site and with the mRNA backbone. Located at the interface of the 30S and 50S subunits, it traverses the body of the 30S subunit contacting proteins on the other side and probably holding the rRNA structure together. The combined cluster of proteins S8, S12 and S17 appears to hold together the shoulder and platform of the 30S subunit. The chain is Small ribosomal subunit protein uS12 from Dechloromonas aromatica (strain RCB).